The primary structure comprises 56 residues: Large ribosomal subunit protein bL32 (56 aa).

Residues 1 to 26 are disordered; it reads MAVQQNKKSRSKRGMRRSHDALSTAQ. Residues 7–16 are compositionally biased toward basic residues; that stretch reads KKSRSKRGMR.

The protein belongs to the bacterial ribosomal protein bL32 family.

The polypeptide is Large ribosomal subunit protein bL32 (Shewanella denitrificans (strain OS217 / ATCC BAA-1090 / DSM 15013)).